A 90-amino-acid polypeptide reads, in one-letter code: MNADGPVVNVHVLFFAKSRELANTPRSKVDVPTKITASDLLDLLVSRFGLISIRDNLILAHNESYIDNLSDTVLFKEGDELAIIPPLSGG.

1-thioglycine; alternate is present on G90. Residue G90 is modified to Glycyl adenylate; alternate.

Belongs to the MoaD family. MOCS2A subfamily. Heterotetramer; composed of 2 small (Mocs2A) and 2 large (Mocs2B) subunits. C-terminal thiocarboxylation occurs in 2 steps, it is first acyl-adenylated (-COAMP) via the hesA/moeB/thiF part of MOCS3, then thiocarboxylated (-COSH) via the rhodanese domain of MOCS3.

It is found in the cytoplasm. It participates in cofactor biosynthesis; molybdopterin biosynthesis. Functionally, acts as a sulfur carrier required for molybdopterin biosynthesis. Component of the molybdopterin synthase complex that catalyzes the conversion of precursor Z into molybdopterin by mediating the incorporation of 2 sulfur atoms into precursor Z to generate a dithiolene group. In the complex, serves as sulfur donor by being thiocarboxylated (-COSH) at its C-terminus by MOCS3. After interaction with Mocs2B, the sulfur is then transferred to precursor Z to form molybdopterin. The sequence is that of Molybdopterin synthase sulfur carrier subunit from Drosophila erecta (Fruit fly).